We begin with the raw amino-acid sequence, 1012 residues long: Ankyrin repeat- and BTB/POZ domain-containing protein 3-B (1012 aa).

The chain crosses the membrane as a helical span at residues Ile160–Tyr180. ANK repeat units follow at residues Gln511 to Ser540, Arg557 to Gly586, and Tyr595 to Ile624. In terms of domain architecture, BTB spans Ser831–His897.

Its subcellular location is the membrane. The protein is Ankyrin repeat- and BTB/POZ domain-containing protein 3-B (abtb3b) of Danio rerio (Zebrafish).